Consider the following 146-residue polypeptide: Arginine repressor (146 aa).

This sequence belongs to the ArgR family.

The protein localises to the cytoplasm. It participates in amino-acid biosynthesis; L-arginine biosynthesis [regulation]. Regulates arginine biosynthesis genes. The protein is Arginine repressor of Parabacteroides distasonis (strain ATCC 8503 / DSM 20701 / CIP 104284 / JCM 5825 / NCTC 11152).